The chain runs to 334 residues: tRNA uridine(34) hydroxylase (334 aa).

Residues 123–217 enclose the Rhodanese domain; that stretch reads SDPDVILVDT…YLEEVKQEES (95 aa). Catalysis depends on cysteine 177, which acts as the Cysteine persulfide intermediate.

It belongs to the TrhO family.

It carries out the reaction uridine(34) in tRNA + AH2 + O2 = 5-hydroxyuridine(34) in tRNA + A + H2O. Catalyzes oxygen-dependent 5-hydroxyuridine (ho5U) modification at position 34 in tRNAs. This Shewanella putrefaciens (strain CN-32 / ATCC BAA-453) protein is tRNA uridine(34) hydroxylase.